The following is a 171-amino-acid chain: UPF0398 protein MGAS9429_Spy1349 (171 aa).

Belongs to the UPF0398 family.

The polypeptide is UPF0398 protein MGAS9429_Spy1349 (Streptococcus pyogenes serotype M12 (strain MGAS9429)).